Reading from the N-terminus, the 184-residue chain is Latex serine proteinase inhibitor (184 aa).

Cys45 and Cys89 are disulfide-bonded. 2 N-linked (GlcNAc...) asparagine glycosylation sites follow: Asn84 and Asn90. Cys142 and Cys153 are oxidised to a cystine.

The protein belongs to the protease inhibitor I3 (leguminous Kunitz-type inhibitor) family.

Its subcellular location is the secreted. The protein resides in the extracellular space. In Carica papaya (Papaya), this protein is Latex serine proteinase inhibitor.